The sequence spans 257 residues: Pyridoxine 5'-phosphate synthase (257 aa).

N6 contacts 3-amino-2-oxopropyl phosphate. 8 to 9 (DH) provides a ligand contact to 1-deoxy-D-xylulose 5-phosphate. R17 provides a ligand contact to 3-amino-2-oxopropyl phosphate. The active-site Proton acceptor is the H41. 1-deoxy-D-xylulose 5-phosphate is bound by residues R43 and H48. E68 (proton acceptor) is an active-site residue. 1-deoxy-D-xylulose 5-phosphate is bound at residue T98. The active-site Proton donor is the H210. 3-amino-2-oxopropyl phosphate-binding positions include G211 and 232–233 (GQ).

The protein belongs to the PNP synthase family. As to quaternary structure, homooctamer; tetramer of dimers.

The protein localises to the cytoplasm. The enzyme catalyses 3-amino-2-oxopropyl phosphate + 1-deoxy-D-xylulose 5-phosphate = pyridoxine 5'-phosphate + phosphate + 2 H2O + H(+). Its pathway is cofactor biosynthesis; pyridoxine 5'-phosphate biosynthesis; pyridoxine 5'-phosphate from D-erythrose 4-phosphate: step 5/5. Functionally, catalyzes the complicated ring closure reaction between the two acyclic compounds 1-deoxy-D-xylulose-5-phosphate (DXP) and 3-amino-2-oxopropyl phosphate (1-amino-acetone-3-phosphate or AAP) to form pyridoxine 5'-phosphate (PNP) and inorganic phosphate. The chain is Pyridoxine 5'-phosphate synthase from Campylobacter jejuni (strain RM1221).